A 235-amino-acid chain; its full sequence is Segregation and condensation protein A (235 aa).

It belongs to the ScpA family. In terms of assembly, component of a cohesin-like complex composed of ScpA, ScpB and the Smc homodimer, in which ScpA and ScpB bind to the head domain of Smc. The presence of the three proteins is required for the association of the complex with DNA.

The protein localises to the cytoplasm. Participates in chromosomal partition during cell division. May act via the formation of a condensin-like complex containing Smc and ScpB that pull DNA away from mid-cell into both cell halves. This chain is Segregation and condensation protein A, found in Streptococcus equi subsp. zooepidemicus (strain H70).